Consider the following 407-residue polypeptide: S-adenosylmethionine synthase (407 aa).

H19 is an ATP binding site. D21 serves as a coordination point for Mg(2+). E47 contributes to the K(+) binding site. Positions 60 and 103 each coordinate L-methionine. Positions 103-113 are flexible loop; it reads QSQEIADGVDN. The interval 107-134 is disordered; the sequence is IADGVDNSDEARTNGDVEEDDRAGAGDQ. Residues 178–180, D258, 264–265, A281, and K285 each bind ATP; these read DGK and RK. D258 is an L-methionine binding site. K289 is an L-methionine binding site.

The protein belongs to the AdoMet synthase family. Homotetramer; dimer of dimers. Mg(2+) is required as a cofactor. K(+) serves as cofactor.

It localises to the cytoplasm. The enzyme catalyses L-methionine + ATP + H2O = S-adenosyl-L-methionine + phosphate + diphosphate. The protein operates within amino-acid biosynthesis; S-adenosyl-L-methionine biosynthesis; S-adenosyl-L-methionine from L-methionine: step 1/1. Catalyzes the formation of S-adenosylmethionine (AdoMet) from methionine and ATP. The overall synthetic reaction is composed of two sequential steps, AdoMet formation and the subsequent tripolyphosphate hydrolysis which occurs prior to release of AdoMet from the enzyme. The protein is S-adenosylmethionine synthase of Corynebacterium glutamicum (strain ATCC 13032 / DSM 20300 / JCM 1318 / BCRC 11384 / CCUG 27702 / LMG 3730 / NBRC 12168 / NCIMB 10025 / NRRL B-2784 / 534).